We begin with the raw amino-acid sequence, 349 residues long: Ion-translocating oxidoreductase complex subunit D (349 aa).

The next 3 helical transmembrane spans lie at 20–42, 77–99, and 124–144; these read VMQR…FGWG, SAML…WMIV, and AMAA…TWIA. Threonine 185 is subject to FMN phosphoryl threonine. Helical transmembrane passes span 212–232, 239–259, 265–285, 291–311, and 315–335; these read STGV…LVLL, WHIS…GFLL, ASPL…FIAT, ATSP…VYII, and GGYP…APFI.

The protein belongs to the NqrB/RnfD family. As to quaternary structure, the complex is composed of six subunits: RnfA, RnfB, RnfC, RnfD, RnfE and RnfG. It depends on FMN as a cofactor.

The protein resides in the cell inner membrane. Its function is as follows. Part of a membrane-bound complex that couples electron transfer with translocation of ions across the membrane. This is Ion-translocating oxidoreductase complex subunit D from Shewanella baltica (strain OS195).